A 314-amino-acid polypeptide reads, in one-letter code: Replication initiation protein (314 aa).

The segment covering 1-10 (MSKNNHANHS) has biased composition (polar residues). The tract at residues 1–25 (MSKNNHANHSNHLENHDLDNFSKTG) is disordered. A compositionally biased stretch (basic and acidic residues) spans 11-20 (NHLENHDLDN).

It belongs to the plasmid replication initiation factor family.

Its function is as follows. This protein is probably a specific topoisomerase involved in initiating replication. This protein is specifically required and may be rate-limiting for replication of the plasmid in vivo. This chain is Replication initiation protein (repN), found in Staphylococcus aureus.